Reading from the N-terminus, the 407-residue chain is Tryptophan synthase beta chain (407 aa).

N6-(pyridoxal phosphate)lysine is present on Lys-86.

The protein belongs to the TrpB family. Tetramer of two alpha and two beta chains. The cofactor is pyridoxal 5'-phosphate.

It catalyses the reaction (1S,2R)-1-C-(indol-3-yl)glycerol 3-phosphate + L-serine = D-glyceraldehyde 3-phosphate + L-tryptophan + H2O. It participates in amino-acid biosynthesis; L-tryptophan biosynthesis; L-tryptophan from chorismate: step 5/5. Functionally, the beta subunit is responsible for the synthesis of L-tryptophan from indole and L-serine. This chain is Tryptophan synthase beta chain, found in Shewanella woodyi (strain ATCC 51908 / MS32).